We begin with the raw amino-acid sequence, 99 residues long: PqqA binding protein (99 aa).

Belongs to the PqqD family. In terms of assembly, monomer. Interacts with PqqE.

The protein operates within cofactor biosynthesis; pyrroloquinoline quinone biosynthesis. Functionally, functions as a PqqA binding protein and presents PqqA to PqqE, in the pyrroloquinoline quinone (PQQ) biosynthetic pathway. The protein is PqqA binding protein of Acinetobacter baylyi (strain ATCC 33305 / BD413 / ADP1).